Consider the following 316-residue polypeptide: 4-hydroxy-3-methylbut-2-enyl diphosphate reductase (316 aa).

C12 provides a ligand contact to [4Fe-4S] cluster. 2 residues coordinate (2E)-4-hydroxy-3-methylbut-2-enyl diphosphate: H43 and H81. Residues H43 and H81 each coordinate dimethylallyl diphosphate. Residues H43 and H81 each coordinate isopentenyl diphosphate. C103 contacts [4Fe-4S] cluster. A (2E)-4-hydroxy-3-methylbut-2-enyl diphosphate-binding site is contributed by H131. Residue H131 participates in dimethylallyl diphosphate binding. H131 is a binding site for isopentenyl diphosphate. E133 functions as the Proton donor in the catalytic mechanism. T170 lines the (2E)-4-hydroxy-3-methylbut-2-enyl diphosphate pocket. C198 is a [4Fe-4S] cluster binding site. Residues S226, N228, and S271 each coordinate (2E)-4-hydroxy-3-methylbut-2-enyl diphosphate. 3 residues coordinate dimethylallyl diphosphate: S226, N228, and S271. Positions 226, 228, and 271 each coordinate isopentenyl diphosphate.

It belongs to the IspH family. It depends on [4Fe-4S] cluster as a cofactor.

It carries out the reaction isopentenyl diphosphate + 2 oxidized [2Fe-2S]-[ferredoxin] + H2O = (2E)-4-hydroxy-3-methylbut-2-enyl diphosphate + 2 reduced [2Fe-2S]-[ferredoxin] + 2 H(+). The enzyme catalyses dimethylallyl diphosphate + 2 oxidized [2Fe-2S]-[ferredoxin] + H2O = (2E)-4-hydroxy-3-methylbut-2-enyl diphosphate + 2 reduced [2Fe-2S]-[ferredoxin] + 2 H(+). It functions in the pathway isoprenoid biosynthesis; dimethylallyl diphosphate biosynthesis; dimethylallyl diphosphate from (2E)-4-hydroxy-3-methylbutenyl diphosphate: step 1/1. It participates in isoprenoid biosynthesis; isopentenyl diphosphate biosynthesis via DXP pathway; isopentenyl diphosphate from 1-deoxy-D-xylulose 5-phosphate: step 6/6. Its function is as follows. Catalyzes the conversion of 1-hydroxy-2-methyl-2-(E)-butenyl 4-diphosphate (HMBPP) into a mixture of isopentenyl diphosphate (IPP) and dimethylallyl diphosphate (DMAPP). Acts in the terminal step of the DOXP/MEP pathway for isoprenoid precursor biosynthesis. The protein is 4-hydroxy-3-methylbut-2-enyl diphosphate reductase of Bacillus anthracis (strain A0248).